We begin with the raw amino-acid sequence, 324 residues long: MGRPRRRGRDINGVLLLDKPLGLSSNDVLQKVKRLFSANRAGHTGALDPLATGMLPICLGEATKFSQFLLDSDKRYRVVARLGQRTDTSDAEGALISEREVNLTQAQIDTALESFRGESQQIPSMYSALKHQGKPLYEYARQGIEVEREARSITVYELLFIRWEGNDLELEIHCSKGTYIRTIIDDLGELLGCGAHVSYLRRLQVATYPSERMVTLEQLTAMVEAAQAEGRSPNPELDSLLLPMDSAVLNFPEVNLLPSVAAYVKQGQPVHVSGAPSEGMVRITEGKERNFIGIGTIAEDGRVAPKRLVVESVEVENLPVENKK.

Residue His43 participates in substrate binding. Asp48 serves as the catalytic Nucleophile. Residues Tyr76, Tyr179, and Leu200 each coordinate substrate.

It belongs to the pseudouridine synthase TruB family. Type 1 subfamily.

It carries out the reaction uridine(55) in tRNA = pseudouridine(55) in tRNA. Functionally, responsible for synthesis of pseudouridine from uracil-55 in the psi GC loop of transfer RNAs. This is tRNA pseudouridine synthase B from Yersinia pestis bv. Antiqua (strain Nepal516).